The following is a 277-amino-acid chain: C2H2-type zinc-finger transcription factor (277 aa).

2 disordered regions span residues 23–66 and 78–146; these read PTMN…AHPP and MNEP…TDSI. Residues 27-37 are compositionally biased toward polar residues; that stretch reads EIETTDNTYPR. The C2H2-type; degenerate zinc-finger motif lies at 185–208; the sequence is HPCPDCGRVFTRSTARNFHRQSGT.

It belongs to the GLI C2H2-type zinc-finger protein family.

The protein resides in the nucleus. C2H2-type zinc-finger transcription factor that controls the expression of the nonribosomal peptide synthases inpA and inpB, as well as of the other inp cluster-associated genes. Also mediates the expression of the asperfuranone biosynthesis gene cluster by binding to the afoA promoter. Probably recognizes the 5'-CT/C/AAAAGGAT/AT/GG/CA-3' motif in the promoters of teget genes. The chain is C2H2-type zinc-finger transcription factor from Emericella nidulans (strain FGSC A4 / ATCC 38163 / CBS 112.46 / NRRL 194 / M139) (Aspergillus nidulans).